A 197-amino-acid polypeptide reads, in one-letter code: Imidazoleglycerol-phosphate dehydratase (197 aa).

Belongs to the imidazoleglycerol-phosphate dehydratase family.

The protein resides in the cytoplasm. It carries out the reaction D-erythro-1-(imidazol-4-yl)glycerol 3-phosphate = 3-(imidazol-4-yl)-2-oxopropyl phosphate + H2O. The protein operates within amino-acid biosynthesis; L-histidine biosynthesis; L-histidine from 5-phospho-alpha-D-ribose 1-diphosphate: step 6/9. The chain is Imidazoleglycerol-phosphate dehydratase from Pseudomonas fluorescens (strain Pf0-1).